Reading from the N-terminus, the 498-residue chain is L-ornithine N(5)-monooxygenase (498 aa).

Residues 80 to 88 (ERQKQFAWH) and Q99 contribute to the FAD site. Position 104 (K104) interacts with substrate. An FAD-binding site is contributed by V165. NADP(+) contacts are provided by residues 251–254 (SGQS) and R276. Substrate contacts are provided by residues 290–293 (NEVF) and N320. Residue 320-322 (NYS) coordinates NADP(+). 463 to 465 (SLL) is a binding site for FAD. S466 is a substrate binding site.

It belongs to the lysine N(6)-hydroxylase/L-ornithine N(5)-oxygenase family. As to quaternary structure, homotetramer. FAD serves as cofactor.

It carries out the reaction L-ornithine + NADPH + O2 = N(5)-hydroxy-L-ornithine + NADP(+) + H2O. The enzyme catalyses L-ornithine + NADH + O2 = N(5)-hydroxy-L-ornithine + NAD(+) + H2O. The protein operates within siderophore biosynthesis. Catalyzes the conversion of L-ornithine to N(5)-hydroxyornithine, the first step in the biosynthesis of all hydroxamate-containing siderophores, such as the secreted triacetylfusarinine C (TAFC) involved in iron uptake and the intracellular iron storage compound desferriferricrocin (DFFC). The chain is L-ornithine N(5)-monooxygenase from Emericella nidulans (strain FGSC A4 / ATCC 38163 / CBS 112.46 / NRRL 194 / M139) (Aspergillus nidulans).